The sequence spans 356 residues: L-amino acid-D/L-Glu epimerase (356 aa).

Residues Arg25, Ser136, and 161 to 163 contribute to the substrate site; that span reads KVK. Position 191 (Asp191) interacts with Mg(2+). Substrate is bound at residue Asn193. 2 residues coordinate Mg(2+): Glu219 and Asp244. Residues Lys268, 296 to 298, and 320 to 322 each bind substrate; these read CMM and DLD.

This sequence belongs to the mandelate racemase/muconate lactonizing enzyme family. It depends on Mg(2+) as a cofactor.

Its function is as follows. Catalyzes the epimerization of dipeptides with L-Glu in the second position. Has epimerase activity with L-Ala-L-Glu, L-Pro-L-Glu, L-Val-L-Glu, L-Thr-L-Glu and L-Met-L-Glu (in vitro). The chain is L-amino acid-D/L-Glu epimerase from Francisella philomiragia subsp. philomiragia (strain ATCC 25017 / CCUG 19701 / FSC 153 / O#319-036).